Consider the following 398-residue polypeptide: UDP-N-acetylglucosamine--N-acetylmuramyl-(pentapeptide) pyrophosphoryl-undecaprenol N-acetylglucosamine transferase (398 aa).

Residues 11–13 (TGG), Asn124, Arg164, Ser192, and Gln318 contribute to the UDP-N-acetyl-alpha-D-glucosamine site.

The protein belongs to the glycosyltransferase 28 family. MurG subfamily.

It localises to the cell membrane. The enzyme catalyses di-trans,octa-cis-undecaprenyl diphospho-N-acetyl-alpha-D-muramoyl-L-alanyl-D-glutamyl-meso-2,6-diaminopimeloyl-D-alanyl-D-alanine + UDP-N-acetyl-alpha-D-glucosamine = di-trans,octa-cis-undecaprenyl diphospho-[N-acetyl-alpha-D-glucosaminyl-(1-&gt;4)]-N-acetyl-alpha-D-muramoyl-L-alanyl-D-glutamyl-meso-2,6-diaminopimeloyl-D-alanyl-D-alanine + UDP + H(+). It functions in the pathway cell wall biogenesis; peptidoglycan biosynthesis. In terms of biological role, cell wall formation. Catalyzes the transfer of a GlcNAc subunit on undecaprenyl-pyrophosphoryl-MurNAc-pentapeptide (lipid intermediate I) to form undecaprenyl-pyrophosphoryl-MurNAc-(pentapeptide)GlcNAc (lipid intermediate II). This chain is UDP-N-acetylglucosamine--N-acetylmuramyl-(pentapeptide) pyrophosphoryl-undecaprenol N-acetylglucosamine transferase, found in Deinococcus radiodurans (strain ATCC 13939 / DSM 20539 / JCM 16871 / CCUG 27074 / LMG 4051 / NBRC 15346 / NCIMB 9279 / VKM B-1422 / R1).